Here is a 453-residue protein sequence, read N- to C-terminus: Glutamyl-tRNA(Gln) amidotransferase subunit A (453 aa).

Residues lysine 56 and serine 131 each act as charge relay system in the active site. Serine 155 serves as the catalytic Acyl-ester intermediate.

The protein belongs to the amidase family. GatA subfamily. As to quaternary structure, heterotrimer of A, B and C subunits.

It catalyses the reaction L-glutamyl-tRNA(Gln) + L-glutamine + ATP + H2O = L-glutaminyl-tRNA(Gln) + L-glutamate + ADP + phosphate + H(+). In terms of biological role, allows the formation of correctly charged Gln-tRNA(Gln) through the transamidation of misacylated Glu-tRNA(Gln) in organisms which lack glutaminyl-tRNA synthetase. The reaction takes place in the presence of glutamine and ATP through an activated gamma-phospho-Glu-tRNA(Gln). The protein is Glutamyl-tRNA(Gln) amidotransferase subunit A of Campylobacter jejuni subsp. doylei (strain ATCC BAA-1458 / RM4099 / 269.97).